The chain runs to 95 residues: Protein TusB (95 aa).

This sequence belongs to the DsrH/TusB family. Heterohexamer, formed by a dimer of trimers. The hexameric TusBCD complex contains 2 copies each of TusB, TusC and TusD. The TusBCD complex interacts with TusE.

Its subcellular location is the cytoplasm. Functionally, part of a sulfur-relay system required for 2-thiolation of 5-methylaminomethyl-2-thiouridine (mnm(5)s(2)U) at tRNA wobble positions. The polypeptide is Protein TusB (Escherichia coli O139:H28 (strain E24377A / ETEC)).